Reading from the N-terminus, the 801-residue chain is Conserved oligomeric Golgi complex subunit 4 (801 aa).

The interval 397-427 is disordered; the sequence is IRSPSGDGDDEENEEARQERHRLRKEAKEQK.

It belongs to the COG4 family. Component of the conserved oligomeric Golgi complex which is composed of eight different subunits and is required for normal Golgi morphology and localization.

It is found in the golgi apparatus membrane. Required for normal Golgi function. This chain is Conserved oligomeric Golgi complex subunit 4 (cogc-4), found in Caenorhabditis elegans.